A 104-amino-acid polypeptide reads, in one-letter code: Snakin-2 (104 aa).

The signal sequence occupies residues 1–23 (MAISKALFASLLLSLLLLEQVQS). Residues 24–38 (IQTDQVTSNAISEAA) constitute a propeptide, removed in mature form.

The protein belongs to the GASA family. In terms of processing, six disulfide bonds may be present. As to expression, expressed in tubers, stems, flowers, shoot apex and leaves, but not in roots or stolons.

The protein resides in the secreted. The protein localises to the cell wall. In terms of biological role, has an antimicrobial activity. Causes a rapid aggregation of both Gram-positive and Gram-negative bacteria, but the antimicrobial activity is not correlated with the capacity to aggregate bacteria. This Solanum tuberosum (Potato) protein is Snakin-2 (SN2).